The sequence spans 95 residues: MLNEIIEKLFYRNNPKSREEVKRRLKLVIAHDRADLNPEIIQAMRKDIIDVVSRYVEIDDTDSEFLLENNQRATSLVANLPIRRIKAKPTQDQED.

The protein belongs to the MinE family.

Its function is as follows. Prevents the cell division inhibition by proteins MinC and MinD at internal division sites while permitting inhibition at polar sites. This ensures cell division at the proper site by restricting the formation of a division septum at the midpoint of the long axis of the cell. This chain is Cell division topological specificity factor, found in Trichodesmium erythraeum (strain IMS101).